A 678-amino-acid chain; its full sequence is Methionine--tRNA ligase (678 aa).

Residues 18–28 (PYANGPIHLGH) carry the 'HIGH' region motif. Zn(2+) is bound by residues C149, C152, C162, and C165. The short motif at 334 to 338 (KMSKS) is the 'KMSKS' region element. K337 serves as a coordination point for ATP. Positions 577–678 (DFAKVDLRVA…SGATPGMRVM (102 aa)) constitute a tRNA-binding domain.

The protein belongs to the class-I aminoacyl-tRNA synthetase family. MetG type 1 subfamily. Homodimer. Zn(2+) serves as cofactor.

The protein localises to the cytoplasm. It carries out the reaction tRNA(Met) + L-methionine + ATP = L-methionyl-tRNA(Met) + AMP + diphosphate. Functionally, is required not only for elongation of protein synthesis but also for the initiation of all mRNA translation through initiator tRNA(fMet) aminoacylation. The protein is Methionine--tRNA ligase of Marinobacter nauticus (strain ATCC 700491 / DSM 11845 / VT8) (Marinobacter aquaeolei).